We begin with the raw amino-acid sequence, 128 residues long: Sulfurtransferase TusD (128 aa).

Cysteine 78 (cysteine persulfide intermediate) is an active-site residue.

It belongs to the DsrE/TusD family. In terms of assembly, heterohexamer, formed by a dimer of trimers. The hexameric TusBCD complex contains 2 copies each of TusB, TusC and TusD. The TusBCD complex interacts with TusE.

Its subcellular location is the cytoplasm. Part of a sulfur-relay system required for 2-thiolation of 5-methylaminomethyl-2-thiouridine (mnm(5)s(2)U) at tRNA wobble positions. Accepts sulfur from TusA and transfers it in turn to TusE. This chain is Sulfurtransferase TusD, found in Klebsiella pneumoniae (strain 342).